Reading from the N-terminus, the 59-residue chain is Large ribosomal subunit protein uL30 (59 aa).

Belongs to the universal ribosomal protein uL30 family. In terms of assembly, part of the 50S ribosomal subunit.

The polypeptide is Large ribosomal subunit protein uL30 (Pelotomaculum thermopropionicum (strain DSM 13744 / JCM 10971 / SI)).